Consider the following 293-residue polypeptide: MSTSHESHHAPVDGAGGPSTTGHEWDGIQELNNPLPRWWLWTFYATIIWAFGYWVAYPAWPLVSNYTSGVLGWNSRSAVVEQISDLQKLRAASSAKLANVPLEDIEKNPELLSLARAEGKVAFADNCAPCHGAGGGGAKGFPNLNDDDWLWGGTLAQIQQTITHGIRSGDDEGHQGNMLAFGSILSKADISNVADYVRSLSGAAPGDTPAAKKGAEIFAANCATCHGENGKGNQELGSKNLTDGIWLYGGDKATIVQTITNGRGGVMPAWGPRLSPTTIKALTVYVHTLGGGQ.

Over residues 1–11 (MSTSHESHHAP) the composition is skewed to basic and acidic residues. The segment at 1–25 (MSTSHESHHAPVDGAGGPSTTGHEW) is disordered. A helical transmembrane segment spans residues 43–63 (FYATIIWAFGYWVAYPAWPLV). 2 consecutive Cytochrome c domains span residues 114 to 201 (LARA…RSLS) and 209 to 290 (PAAK…HTLG). Positions 127, 130, 131, 178, 222, 225, 226, and 267 each coordinate heme c.

It belongs to the CcoP / FixP family. As to quaternary structure, component of the cbb3-type cytochrome c oxidase at least composed of FixN, FixO, FixQ and FixP. The cofactor is heme c.

The protein resides in the cell inner membrane. The protein operates within energy metabolism; oxidative phosphorylation. C-type cytochrome. Part of the cbb3-type cytochrome c oxidase complex. FixP subunit is required for transferring electrons from donor cytochrome c via its heme groups to FixO subunit. From there, electrons are shuttled to the catalytic binuclear center of FixN subunit where oxygen reduction takes place. The complex also functions as a proton pump. The polypeptide is Cbb3-type cytochrome c oxidase subunit FixP (Azorhizobium caulinodans (strain ATCC 43989 / DSM 5975 / JCM 20966 / LMG 6465 / NBRC 14845 / NCIMB 13405 / ORS 571)).